The chain runs to 156 residues: Small ribosomal subunit protein uS7 (156 aa).

It belongs to the universal ribosomal protein uS7 family. As to quaternary structure, part of the 30S ribosomal subunit. Contacts proteins S9 and S11.

Its function is as follows. One of the primary rRNA binding proteins, it binds directly to 16S rRNA where it nucleates assembly of the head domain of the 30S subunit. Is located at the subunit interface close to the decoding center, probably blocks exit of the E-site tRNA. In Alkaliphilus metalliredigens (strain QYMF), this protein is Small ribosomal subunit protein uS7.